Reading from the N-terminus, the 182-residue chain is ATP synthase subunit delta (182 aa).

This sequence belongs to the ATPase delta chain family. F-type ATPases have 2 components, F(1) - the catalytic core - and F(0) - the membrane proton channel. F(1) has five subunits: alpha(3), beta(3), gamma(1), delta(1), epsilon(1). F(0) has three main subunits: a(1), b(2) and c(10-14). The alpha and beta chains form an alternating ring which encloses part of the gamma chain. F(1) is attached to F(0) by a central stalk formed by the gamma and epsilon chains, while a peripheral stalk is formed by the delta and b chains.

The protein localises to the cell inner membrane. In terms of biological role, f(1)F(0) ATP synthase produces ATP from ADP in the presence of a proton or sodium gradient. F-type ATPases consist of two structural domains, F(1) containing the extramembraneous catalytic core and F(0) containing the membrane proton channel, linked together by a central stalk and a peripheral stalk. During catalysis, ATP synthesis in the catalytic domain of F(1) is coupled via a rotary mechanism of the central stalk subunits to proton translocation. This protein is part of the stalk that links CF(0) to CF(1). It either transmits conformational changes from CF(0) to CF(1) or is implicated in proton conduction. The chain is ATP synthase subunit delta from Pseudothermotoga lettingae (strain ATCC BAA-301 / DSM 14385 / NBRC 107922 / TMO) (Thermotoga lettingae).